We begin with the raw amino-acid sequence, 326 residues long: MQGSARNFLKPKLVESSQTGVNEFKVILEPLERGFGHTLGNALRRTLLSSMTGSAVTEVAIDGVMHEFSTIEGVQEDVLDILLNLKEVSVMLNTAETAQVVIEKKGPCEITVADIEANGIDITAFNPDKVIATINDESHMRMTLKISTGIGYDTATSRTDEASSIGGMQLDASFSPIRRVSFTVDAARVKQKVNLDKLNITIETNGSVNAEVAIKRAAIILQEQLSSFVELELVEEEEALPTSEDFDPQLLAAVDELELTVRSANCLKAEQIYYIGDLIQKSEQDLLRTPNLGRKSLNEIKEVLTEKGLNLATSIENWPPVDLMSE.

The segment at 1-232 is alpha N-terminal domain (alpha-NTD); sequence MQGSARNFLK…EQLSSFVELE (232 aa). The segment at 246–326 is alpha C-terminal domain (alpha-CTD); it reads FDPQLLAAVD…NWPPVDLMSE (81 aa).

Belongs to the RNA polymerase alpha chain family. Homodimer. The RNAP catalytic core consists of 2 alpha, 1 beta, 1 beta' and 1 omega subunit. When a sigma factor is associated with the core the holoenzyme is formed, which can initiate transcription.

The catalysed reaction is RNA(n) + a ribonucleoside 5'-triphosphate = RNA(n+1) + diphosphate. Functionally, DNA-dependent RNA polymerase catalyzes the transcription of DNA into RNA using the four ribonucleoside triphosphates as substrates. In Ruthia magnifica subsp. Calyptogena magnifica, this protein is DNA-directed RNA polymerase subunit alpha.